Consider the following 689-residue polypeptide: Glycine--tRNA ligase beta subunit (689 aa).

This sequence belongs to the class-II aminoacyl-tRNA synthetase family. In terms of assembly, tetramer of two alpha and two beta subunits.

It is found in the cytoplasm. It carries out the reaction tRNA(Gly) + glycine + ATP = glycyl-tRNA(Gly) + AMP + diphosphate. The sequence is that of Glycine--tRNA ligase beta subunit from Salmonella heidelberg (strain SL476).